Here is a 206-residue protein sequence, read N- to C-terminus: MSNVRSKICGITRIEDALAAAEAGADAIGFVFYAKSPRAVDVRQARAIMAELPPFVTTVGLFVNASRCELNEILEAVPLDLLQFHGDETPADCEGYHRPWIKALRVRPGDDLEAACRHYAGARGILLDTYVAGVPGGTGEAFDWSLVPSRLSKPIILAGGLSAGNVGQAIAQVRPYAVDVSGGVEQAKGIKDAAKIEAFMRAVKQA.

Belongs to the TrpF family.

The enzyme catalyses N-(5-phospho-beta-D-ribosyl)anthranilate = 1-(2-carboxyphenylamino)-1-deoxy-D-ribulose 5-phosphate. It functions in the pathway amino-acid biosynthesis; L-tryptophan biosynthesis; L-tryptophan from chorismate: step 3/5. The polypeptide is N-(5'-phosphoribosyl)anthranilate isomerase (Pseudomonas putida (strain W619)).